The primary structure comprises 462 residues: ATP synthase subunit beta (462 aa).

ATP is bound at residue 152–159 (GGAGVGKT).

The protein belongs to the ATPase alpha/beta chains family. As to quaternary structure, F-type ATPases have 2 components, CF(1) - the catalytic core - and CF(0) - the membrane proton channel. CF(1) has five subunits: alpha(3), beta(3), gamma(1), delta(1), epsilon(1). CF(0) has three main subunits: a(1), b(2) and c(9-12). The alpha and beta chains form an alternating ring which encloses part of the gamma chain. CF(1) is attached to CF(0) by a central stalk formed by the gamma and epsilon chains, while a peripheral stalk is formed by the delta and b chains.

Its subcellular location is the cell inner membrane. The enzyme catalyses ATP + H2O + 4 H(+)(in) = ADP + phosphate + 5 H(+)(out). Functionally, produces ATP from ADP in the presence of a proton gradient across the membrane. The catalytic sites are hosted primarily by the beta subunits. This chain is ATP synthase subunit beta, found in Tolumonas auensis (strain DSM 9187 / NBRC 110442 / TA 4).